Here is a 465-residue protein sequence, read N- to C-terminus: Ribulose bisphosphate carboxylase large chain (465 aa).

Position 4 is an N6,N6,N6-trimethyllysine (lysine 4). Substrate is bound by residues asparagine 113 and threonine 163. Lysine 165 acts as the Proton acceptor in catalysis. Residue lysine 167 coordinates substrate. Lysine 191, aspartate 193, and glutamate 194 together coordinate Mg(2+). N6-carboxylysine is present on lysine 191. Histidine 284 (proton acceptor) is an active-site residue. 3 residues coordinate substrate: arginine 285, histidine 317, and serine 369.

This sequence belongs to the RuBisCO large chain family. Type I subfamily. In terms of assembly, heterohexadecamer of 8 large chains and 8 small chains; disulfide-linked. The disulfide link is formed within the large subunit homodimers. It depends on Mg(2+) as a cofactor. Post-translationally, the disulfide bond which can form in the large chain dimeric partners within the hexadecamer appears to be associated with oxidative stress and protein turnover.

The protein resides in the plastid. It localises to the chloroplast. The enzyme catalyses 2 (2R)-3-phosphoglycerate + 2 H(+) = D-ribulose 1,5-bisphosphate + CO2 + H2O. It catalyses the reaction D-ribulose 1,5-bisphosphate + O2 = 2-phosphoglycolate + (2R)-3-phosphoglycerate + 2 H(+). In terms of biological role, ruBisCO catalyzes two reactions: the carboxylation of D-ribulose 1,5-bisphosphate, the primary event in carbon dioxide fixation, as well as the oxidative fragmentation of the pentose substrate in the photorespiration process. Both reactions occur simultaneously and in competition at the same active site. This is Ribulose bisphosphate carboxylase large chain from Ilex crenata (Japanese holly).